The chain runs to 63 residues: uncharacterized protein (63 aa).

A helical membrane pass occupies residues 4–24 (LNQFILIFLLLIVILFIFFLI).

It is found in the membrane. This is an uncharacterized protein from Invertebrate iridescent virus 6 (IIV-6).